We begin with the raw amino-acid sequence, 64 residues long: Cytochrome c oxidase subunit 2 (64 aa).

Residues 1–14 lie on the Mitochondrial intermembrane side of the membrane; that stretch reads MAHPSQLGFQDAAS. A helical membrane pass occupies residues 15-45; that stretch reads PMMEELLHFHDHALMVVFLISTFVLYIILTM. At 46–64 the chain is on the mitochondrial matrix side; sequence LTTKLTDKLILESHEIEII.

It belongs to the cytochrome c oxidase subunit 2 family. Component of the cytochrome c oxidase (complex IV, CIV), a multisubunit enzyme composed of 14 subunits. The complex is composed of a catalytic core of 3 subunits MT-CO1, MT-CO2 and MT-CO3, encoded in the mitochondrial DNA, and 11 supernumerary subunits COX4I, COX5A, COX5B, COX6A, COX6B, COX6C, COX7A, COX7B, COX7C, COX8 and NDUFA4, which are encoded in the nuclear genome. The complex exists as a monomer or a dimer and forms supercomplexes (SCs) in the inner mitochondrial membrane with NADH-ubiquinone oxidoreductase (complex I, CI) and ubiquinol-cytochrome c oxidoreductase (cytochrome b-c1 complex, complex III, CIII), resulting in different assemblies (supercomplex SCI(1)III(2)IV(1) and megacomplex MCI(2)III(2)IV(2)). Found in a complex with TMEM177, COA6, COX18, COX20, SCO1 and SCO2. Interacts with TMEM177 in a COX20-dependent manner. Interacts with COX20. Interacts with COX16. Cu cation is required as a cofactor.

The protein localises to the mitochondrion inner membrane. It catalyses the reaction 4 Fe(II)-[cytochrome c] + O2 + 8 H(+)(in) = 4 Fe(III)-[cytochrome c] + 2 H2O + 4 H(+)(out). In terms of biological role, component of the cytochrome c oxidase, the last enzyme in the mitochondrial electron transport chain which drives oxidative phosphorylation. The respiratory chain contains 3 multisubunit complexes succinate dehydrogenase (complex II, CII), ubiquinol-cytochrome c oxidoreductase (cytochrome b-c1 complex, complex III, CIII) and cytochrome c oxidase (complex IV, CIV), that cooperate to transfer electrons derived from NADH and succinate to molecular oxygen, creating an electrochemical gradient over the inner membrane that drives transmembrane transport and the ATP synthase. Cytochrome c oxidase is the component of the respiratory chain that catalyzes the reduction of oxygen to water. Electrons originating from reduced cytochrome c in the intermembrane space (IMS) are transferred via the dinuclear copper A center (CU(A)) of subunit 2 and heme A of subunit 1 to the active site in subunit 1, a binuclear center (BNC) formed by heme A3 and copper B (CU(B)). The BNC reduces molecular oxygen to 2 water molecules using 4 electrons from cytochrome c in the IMS and 4 protons from the mitochondrial matrix. This chain is Cytochrome c oxidase subunit 2 (mt-co2), found in Geophagus steindachneri (Red hump earth eater).